A 202-amino-acid chain; its full sequence is uncharacterized protein (202 aa).

2 disordered regions span residues 1 to 32 (MRPEGVSRGRASSVSISMCPPPPNGARRASLG) and 46 to 95 (PSSV…PSYT). The segment covering 47–79 (SSVSLSSSSSRRSMPSLGSSRSSSLPSTGSLRS) has biased composition (low complexity).

This is an uncharacterized protein from Equus caballus (Horse).